A 257-amino-acid polypeptide reads, in one-letter code: Imidazole glycerol phosphate synthase subunit HisF (257 aa).

Active-site residues include Asp-12 and Asp-131.

It belongs to the HisA/HisF family. Heterodimer of HisH and HisF.

The protein localises to the cytoplasm. It carries out the reaction 5-[(5-phospho-1-deoxy-D-ribulos-1-ylimino)methylamino]-1-(5-phospho-beta-D-ribosyl)imidazole-4-carboxamide + L-glutamine = D-erythro-1-(imidazol-4-yl)glycerol 3-phosphate + 5-amino-1-(5-phospho-beta-D-ribosyl)imidazole-4-carboxamide + L-glutamate + H(+). Its pathway is amino-acid biosynthesis; L-histidine biosynthesis; L-histidine from 5-phospho-alpha-D-ribose 1-diphosphate: step 5/9. In terms of biological role, IGPS catalyzes the conversion of PRFAR and glutamine to IGP, AICAR and glutamate. The HisF subunit catalyzes the cyclization activity that produces IGP and AICAR from PRFAR using the ammonia provided by the HisH subunit. The protein is Imidazole glycerol phosphate synthase subunit HisF of Paraburkholderia xenovorans (strain LB400).